The sequence spans 365 residues: Class I histocompatibility antigen, Gogo-A*0201 alpha chain (365 aa).

Residues 1–24 (MAVMAPRTLLLLLLGALALTQTWA) form the signal peptide. Residues 25–114 (GSHSMRYFST…LRGYYNQSEA (90 aa)) are alpha-1. The Extracellular portion of the chain corresponds to 25–308 (GSHSMRYFST…EPSSQPTIPI (284 aa)). Asn-110 carries N-linked (GlcNAc...) asparagine glycosylation. The segment at 115-206 (GSHTIQKMYG…ENGKETLQRT (92 aa)) is alpha-2. Intrachain disulfides connect Cys-125-Cys-188 and Cys-227-Cys-283. An alpha-3 region spans residues 207–298 (DAPKTHMTHH…SLPKPLTLRW (92 aa)). Residues 209 to 295 (PKTHMTHHAV…QHESLPKPLT (87 aa)) enclose the Ig-like C1-type domain. The tract at residues 299 to 308 (EPSSQPTIPI) is connecting peptide. A helical transmembrane segment spans residues 309 to 332 (VGIIAGLVLFGAVIAGAVIAAVRW). Residues 333 to 365 (RRKSSDRKGGSYSQAASSDSAQGSDVSLTACKV) are Cytoplasmic-facing. Residues 338 to 365 (DRKGGSYSQAASSDSAQGSDVSLTACKV) form a disordered region. Positions 342 to 359 (GSYSQAASSDSAQGSDVS) are enriched in low complexity. Phosphoserine is present on Ser-343. Position 344 is a phosphotyrosine (Tyr-344). A phosphoserine mark is found at Ser-345, Ser-349, Ser-350, Ser-352, Ser-356, and Ser-359.

It belongs to the MHC class I family. As to quaternary structure, heterodimer of an alpha chain and a beta chain (beta-2-microglobulin).

Its subcellular location is the membrane. Functionally, involved in the presentation of foreign antigens to the immune system. The protein is Class I histocompatibility antigen, Gogo-A*0201 alpha chain of Gorilla gorilla gorilla (Western lowland gorilla).